Reading from the N-terminus, the 199-residue chain is Holliday junction branch migration complex subunit RuvA (199 aa).

The domain I stretch occupies residues 1 to 63 (MIASVRGEVL…EDSMTLYGFT (63 aa)). The domain II stretch occupies residues 64–142 (DAETRDLFLT…AAGAAGAPAG (79 aa)). The flexible linker stretch occupies residues 143–153 (AARNGHAVRGP). The segment at 153 to 199 (PVVEALVGLGFAAKQAEEATDKVLAAEPEAGTSGALRAALSLLGKSR) is domain III.

It belongs to the RuvA family. Homotetramer. Forms an RuvA(8)-RuvB(12)-Holliday junction (HJ) complex. HJ DNA is sandwiched between 2 RuvA tetramers; dsDNA enters through RuvA and exits via RuvB. An RuvB hexamer assembles on each DNA strand where it exits the tetramer. Each RuvB hexamer is contacted by two RuvA subunits (via domain III) on 2 adjacent RuvB subunits; this complex drives branch migration. In the full resolvosome a probable DNA-RuvA(4)-RuvB(12)-RuvC(2) complex forms which resolves the HJ.

The protein localises to the cytoplasm. Its function is as follows. The RuvA-RuvB-RuvC complex processes Holliday junction (HJ) DNA during genetic recombination and DNA repair, while the RuvA-RuvB complex plays an important role in the rescue of blocked DNA replication forks via replication fork reversal (RFR). RuvA specifically binds to HJ cruciform DNA, conferring on it an open structure. The RuvB hexamer acts as an ATP-dependent pump, pulling dsDNA into and through the RuvAB complex. HJ branch migration allows RuvC to scan DNA until it finds its consensus sequence, where it cleaves and resolves the cruciform DNA. The polypeptide is Holliday junction branch migration complex subunit RuvA (Mycobacterium avium (strain 104)).